The following is an 84-amino-acid chain: MSGGSTGERPFSDIITSVRYWIIHSITIPSLFVSGWLFVSTGLAYDVFGTPRPNEYFTQDRQQIPLVNDRFSAKQELEDLTKGL.

Residues 22 to 36 form a helical membrane-spanning segment; it reads IIHSITIPSLFVSGW. His24 is a heme binding site.

The protein belongs to the PsbE/PsbF family. Heterodimer of an alpha subunit and a beta subunit. PSII is composed of 1 copy each of membrane proteins PsbA, PsbB, PsbC, PsbD, PsbE, PsbF, PsbH, PsbI, PsbJ, PsbK, PsbL, PsbM, PsbT, PsbX, PsbY, PsbZ, Psb30/Ycf12, at least 3 peripheral proteins of the oxygen-evolving complex and a large number of cofactors. It forms dimeric complexes. Requires heme b as cofactor.

It is found in the plastid. Its subcellular location is the chloroplast thylakoid membrane. This b-type cytochrome is tightly associated with the reaction center of photosystem II (PSII). PSII is a light-driven water:plastoquinone oxidoreductase that uses light energy to abstract electrons from H(2)O, generating O(2) and a proton gradient subsequently used for ATP formation. It consists of a core antenna complex that captures photons, and an electron transfer chain that converts photonic excitation into a charge separation. This chain is Cytochrome b559 subunit alpha, found in Phaeodactylum tricornutum (strain CCAP 1055/1).